The sequence spans 213 residues: MAALSAPGLCGFRILGLRSSVGTAVQARGVHQSVATDGPSSTQPALPKARAVAPKPSSRGEYVVAKLDDLVNWARRSSLWPMTFGLACCAVEMMHMAAPRYDMDRFGVVFRASPRQSDVMIVAGTLTNKMAPALRKVYDQMPEPRYVVSMGSCANGGGYYHYSYSVVRGCDRIVPVDIYIPGCPPTAEALLYGILQLQRKIKRERRLQIWYRR.

Residues 1–38 constitute a mitochondrion transit peptide; it reads MAALSAPGLCGFRILGLRSSVGTAVQARGVHQSVATDG. A disordered region spans residues 32-53; the sequence is QSVATDGPSSTQPALPKARAVA. A compositionally biased stretch (polar residues) spans 33 to 44; that stretch reads SVATDGPSSTQP. Cys-88 and Cys-89 together coordinate [4Fe-4S] cluster. Arg-111 is subject to Hydroxyarginine. Residues Cys-153 and Cys-183 each contribute to the [4Fe-4S] cluster site.

The protein belongs to the complex I 20 kDa subunit family. Core subunit of respiratory chain NADH dehydrogenase (Complex I) which is composed of 45 different subunits. This is a component of the iron-sulfur (IP) fragment of the enzyme. The cofactor is [4Fe-4S] cluster. Hydroxylated ar Arg-111 by NDUFAF5 early in the pathway of assembly of complex I, before the formation of the juncture between peripheral and membrane arms.

The protein localises to the mitochondrion inner membrane. The enzyme catalyses a ubiquinone + NADH + 5 H(+)(in) = a ubiquinol + NAD(+) + 4 H(+)(out). Its function is as follows. Core subunit of the mitochondrial membrane respiratory chain NADH dehydrogenase (Complex I) which catalyzes electron transfer from NADH through the respiratory chain, using ubiquinone as an electron acceptor. Essential for the catalytic activity of complex I. This chain is NADH dehydrogenase [ubiquinone] iron-sulfur protein 7, mitochondrial (NDUFS7), found in Gorilla gorilla gorilla (Western lowland gorilla).